Consider the following 541-residue polypeptide: Glucose-6-phosphate isomerase (541 aa).

E353 serves as the catalytic Proton donor. Residues H384 and K504 contribute to the active site.

This sequence belongs to the GPI family.

The protein localises to the cytoplasm. It catalyses the reaction alpha-D-glucose 6-phosphate = beta-D-fructose 6-phosphate. It participates in carbohydrate biosynthesis; gluconeogenesis. The protein operates within carbohydrate degradation; glycolysis; D-glyceraldehyde 3-phosphate and glycerone phosphate from D-glucose: step 2/4. Functionally, catalyzes the reversible isomerization of glucose-6-phosphate to fructose-6-phosphate. This is Glucose-6-phosphate isomerase from Deinococcus radiodurans (strain ATCC 13939 / DSM 20539 / JCM 16871 / CCUG 27074 / LMG 4051 / NBRC 15346 / NCIMB 9279 / VKM B-1422 / R1).